The primary structure comprises 141 residues: Nucleoside diphosphate kinase (141 aa).

6 residues coordinate ATP: Lys11, Phe59, Arg87, Thr93, Arg104, and Asn114. Catalysis depends on His117, which acts as the Pros-phosphohistidine intermediate.

The protein belongs to the NDK family. Homotetramer. The cofactor is Mg(2+).

Its subcellular location is the cytoplasm. The catalysed reaction is a 2'-deoxyribonucleoside 5'-diphosphate + ATP = a 2'-deoxyribonucleoside 5'-triphosphate + ADP. The enzyme catalyses a ribonucleoside 5'-diphosphate + ATP = a ribonucleoside 5'-triphosphate + ADP. Its function is as follows. Major role in the synthesis of nucleoside triphosphates other than ATP. The ATP gamma phosphate is transferred to the NDP beta phosphate via a ping-pong mechanism, using a phosphorylated active-site intermediate. The chain is Nucleoside diphosphate kinase from Polaromonas naphthalenivorans (strain CJ2).